A 477-amino-acid chain; its full sequence is RNA pseudouridine synthase 6, chloroplastic (477 aa).

The N-terminal 52 residues, 1 to 52 (MPKAAASLASLLPQLWHRPVQPPPFLHRALSSSSPLLRRHRAALHSPAAPLS), are a transit peptide targeting the chloroplast. Residues 98–205 (EVAVDFISRS…FPRCYEIDWK (108 aa)) form the S4 RNA-binding domain. Asp-258 is a catalytic residue.

It belongs to the pseudouridine synthase RluA family.

The protein resides in the plastid. The protein localises to the chloroplast. It carries out the reaction a uridine in RNA = a pseudouridine in RNA. The polypeptide is RNA pseudouridine synthase 6, chloroplastic (Oryza sativa subsp. japonica (Rice)).